The following is a 494-amino-acid chain: Aspartyl/glutamyl-tRNA(Asn/Gln) amidotransferase subunit B (494 aa).

The protein belongs to the GatB/GatE family. GatB subfamily. As to quaternary structure, heterotrimer of A, B and C subunits.

The catalysed reaction is L-glutamyl-tRNA(Gln) + L-glutamine + ATP + H2O = L-glutaminyl-tRNA(Gln) + L-glutamate + ADP + phosphate + H(+). The enzyme catalyses L-aspartyl-tRNA(Asn) + L-glutamine + ATP + H2O = L-asparaginyl-tRNA(Asn) + L-glutamate + ADP + phosphate + 2 H(+). Its function is as follows. Allows the formation of correctly charged Asn-tRNA(Asn) or Gln-tRNA(Gln) through the transamidation of misacylated Asp-tRNA(Asn) or Glu-tRNA(Gln) in organisms which lack either or both of asparaginyl-tRNA or glutaminyl-tRNA synthetases. The reaction takes place in the presence of glutamine and ATP through an activated phospho-Asp-tRNA(Asn) or phospho-Glu-tRNA(Gln). This Rhodopseudomonas palustris (strain ATCC BAA-98 / CGA009) protein is Aspartyl/glutamyl-tRNA(Asn/Gln) amidotransferase subunit B.